A 47-amino-acid polypeptide reads, in one-letter code: Large ribosomal subunit protein eL40 (47 aa).

Belongs to the eukaryotic ribosomal protein eL40 family.

This chain is Large ribosomal subunit protein eL40, found in Methanocaldococcus jannaschii (strain ATCC 43067 / DSM 2661 / JAL-1 / JCM 10045 / NBRC 100440) (Methanococcus jannaschii).